A 281-amino-acid polypeptide reads, in one-letter code: ATP synthase gamma chain (281 aa).

This sequence belongs to the ATPase gamma chain family. In terms of assembly, F-type ATPases have 2 components, CF(1) - the catalytic core - and CF(0) - the membrane proton channel. CF(1) has five subunits: alpha(3), beta(3), gamma(1), delta(1), epsilon(1). CF(0) has three main subunits: a, b and c.

The protein resides in the cell membrane. Functionally, produces ATP from ADP in the presence of a proton gradient across the membrane. The gamma chain is believed to be important in regulating ATPase activity and the flow of protons through the CF(0) complex. This chain is ATP synthase gamma chain, found in Desulfitobacterium hafniense (strain DSM 10664 / DCB-2).